The chain runs to 508 residues: Photosystem II CP47 reaction center protein (508 aa).

Helical transmembrane passes span Ser-21–Ser-36, Ile-101–Trp-115, Gly-140–Phe-156, Ile-203–Ser-218, Val-237–Val-252, and Ser-457–Arg-472.

This sequence belongs to the PsbB/PsbC family. PsbB subfamily. As to quaternary structure, PSII is composed of 1 copy each of membrane proteins PsbA, PsbB, PsbC, PsbD, PsbE, PsbF, PsbH, PsbI, PsbJ, PsbK, PsbL, PsbM, PsbT, PsbX, PsbY, PsbZ, Psb30/Ycf12, at least 3 peripheral proteins of the oxygen-evolving complex and a large number of cofactors. It forms dimeric complexes. Binds multiple chlorophylls. PSII binds additional chlorophylls, carotenoids and specific lipids. serves as cofactor.

The protein localises to the plastid. The protein resides in the chloroplast thylakoid membrane. Functionally, one of the components of the core complex of photosystem II (PSII). It binds chlorophyll and helps catalyze the primary light-induced photochemical processes of PSII. PSII is a light-driven water:plastoquinone oxidoreductase, using light energy to abstract electrons from H(2)O, generating O(2) and a proton gradient subsequently used for ATP formation. This is Photosystem II CP47 reaction center protein from Gossypium hirsutum (Upland cotton).